A 530-amino-acid polypeptide reads, in one-letter code: AA9 family lytic polysaccharide monooxygenase C (530 aa).

Positions 1–18 (MQLKSTVHFLSLLAYTAA) are cleaved as a signal peptide. Positions 19 and 103 each coordinate Cu(2+). Cystine bridges form between cysteine 72/cysteine 190 and cysteine 114/cysteine 118. A glycan (N-linked (GlcNAc...) asparagine) is linked at asparagine 150. O2 is bound at residue glutamine 185. Tyrosine 187 provides a ligand contact to Cu(2+). Over residues 238–251 (YGSGSSSSQNSVES) the composition is skewed to low complexity. Disordered regions lie at residues 238–279 (YGSG…STSA), 297–329 (ESSS…SSSA), 348–375 (YSSA…KLSS), and 492–512 (GNGA…GTTP). The segment covering 312 to 324 (KSVEAKETTKVEE) has biased composition (basic and acidic residues). Residues 348 to 368 (YSSASPSSSPVLSSSKPASTS) show a composition bias toward low complexity.

It belongs to the polysaccharide monooxygenase AA9 family. Cu(2+) is required as a cofactor.

The protein resides in the secreted. It carries out the reaction [(1-&gt;4)-beta-D-glucosyl]n+m + reduced acceptor + O2 = 4-dehydro-beta-D-glucosyl-[(1-&gt;4)-beta-D-glucosyl]n-1 + [(1-&gt;4)-beta-D-glucosyl]m + acceptor + H2O.. Its function is as follows. Lytic polysaccharide monooxygenase (LPMO) that depolymerizes polysaccharides via the oxidation of scissile alpha- or beta-(1-4)-glycosidic bonds, yielding C1 or C4 oxidation products. Catalysis by LPMOs requires the reduction of the active-site copper from Cu(II) to Cu(I) by a reducing agent and H(2)O(2) or O(2) as a cosubstrate. Amorphous cellulose is not a suitable substrate for LPMO9C, which may act at the surface of cellulose microfibrils without any release of soluble products. This Geotrichum candidum (Oospora lactis) protein is AA9 family lytic polysaccharide monooxygenase C.